The following is a 225-amino-acid chain: Ribose-5-phosphate isomerase A (225 aa).

Substrate is bound by residues 26–29, 82–85, and 95–98; these read TGST, DGAD, and KGGG. E104 (proton acceptor) is an active-site residue. K122 serves as a coordination point for substrate.

This sequence belongs to the ribose 5-phosphate isomerase family. Homodimer.

The enzyme catalyses aldehydo-D-ribose 5-phosphate = D-ribulose 5-phosphate. Its pathway is carbohydrate degradation; pentose phosphate pathway; D-ribose 5-phosphate from D-ribulose 5-phosphate (non-oxidative stage): step 1/1. Functionally, catalyzes the reversible conversion of ribose-5-phosphate to ribulose 5-phosphate. This is Ribose-5-phosphate isomerase A from Streptococcus gordonii (strain Challis / ATCC 35105 / BCRC 15272 / CH1 / DL1 / V288).